We begin with the raw amino-acid sequence, 151 residues long: UPF0208 membrane protein YfbV (151 aa).

The next 2 membrane-spanning stretches (helical) occupy residues 46–65 (YAIR…QIAL) and 69–91 (LGPA…WWLG).

This sequence belongs to the UPF0208 family.

Its subcellular location is the cell inner membrane. The protein is UPF0208 membrane protein YfbV of Shigella flexneri serotype 5b (strain 8401).